Consider the following 257-residue polypeptide: MRHTPRKRFGQHFLVDTSVIAEIIHIIHPVPGDRMIEIGPGLGALTKPLLNVLDELQVIEIDRDIVDYLSRTYPGKLVIHNIDALKFDFSELGEGLRIIGNLPYNISTPLLFHLSRFSSLITDMYFMLQLEVVERMVALPSTPDYGRLSIMLQNRFEMEQMLVVPAESFDPPPRVQSAIVCMRPKAEPTIPLKHERLFAELVSAAFSQRRKTLRNTLRHYLTADDFERLEIDSGLRAENLSLAQYAAIVRQVYEDRQ.

S-adenosyl-L-methionine contacts are provided by histidine 12, leucine 14, glycine 39, glutamate 60, aspartate 83, and asparagine 101.

This sequence belongs to the class I-like SAM-binding methyltransferase superfamily. rRNA adenine N(6)-methyltransferase family. RsmA subfamily.

It is found in the cytoplasm. The enzyme catalyses adenosine(1518)/adenosine(1519) in 16S rRNA + 4 S-adenosyl-L-methionine = N(6)-dimethyladenosine(1518)/N(6)-dimethyladenosine(1519) in 16S rRNA + 4 S-adenosyl-L-homocysteine + 4 H(+). Its function is as follows. Specifically dimethylates two adjacent adenosines (A1518 and A1519) in the loop of a conserved hairpin near the 3'-end of 16S rRNA in the 30S particle. May play a critical role in biogenesis of 30S subunits. The sequence is that of Ribosomal RNA small subunit methyltransferase A from Nitrosomonas europaea (strain ATCC 19718 / CIP 103999 / KCTC 2705 / NBRC 14298).